Consider the following 58-residue polypeptide: Large ribosomal subunit protein uL30 (58 aa).

Belongs to the universal ribosomal protein uL30 family. In terms of assembly, part of the 50S ribosomal subunit.

The polypeptide is Large ribosomal subunit protein uL30 (Vibrio campbellii (strain ATCC BAA-1116)).